The primary structure comprises 450 residues: Protein tweety homolog 1 (450 aa).

The Extracellular portion of the chain corresponds to 1–43 (MGAPPGYRPSAWVHLLHQLPRADFQLRPVPSGFAPQEQEYQQA). The chain crosses the membrane as a helical span at residues 44–64 (LLLVAALAGLGLGLSLIFIAV). At 65-88 (YLIRFCCCRPPEPPGSKTPSPGGG) the chain is on the cytoplasmic side. The helical transmembrane segment at 89 to 109 (CVTWSCIVALLAGCIGIGIGF) threads the bilayer. At 110–214 (YGNSETSDGV…DVSFVEEYRW (105 aa)) the chain is on the extracellular side. The N-linked (GlcNAc...) asparagine glycan is linked to N130. The helical transmembrane segment at 215–235 (LAYVLLLLLELLVCLFTLLGL) threads the bilayer. Residues 236–240 (AKQSK) lie on the Cytoplasmic side of the membrane. Residues 241-261 (WLVIVMTVMSLLVLVLSWGSM) traverse the membrane as a helical segment. Residues 262–390 (GLEAATAVGL…LRGLCEDALE (129 aa)) are Extracellular-facing. N-linked (GlcNAc...) asparagine glycans are attached at residues N284 and N355. C303 and C370 are disulfide-bonded. Residues 391-411 (GLLFLLLFSLLSAGALATALC) traverse the membrane as a helical segment. Residues 412–450 (SLPRAWALFPPSDDYDDTDDDDPFNPQESKRFVQWQSSI) lie on the Cytoplasmic side of the membrane. Residues 428 to 450 (DTDDDDPFNPQESKRFVQWQSSI) form a disordered region. S440 bears the Phosphoserine mark.

Belongs to the tweety family. As to quaternary structure, homotetramer; disulfide-linked. Homodimer. In terms of processing, N-glycosylated. Contains high-mannose, hybrid and complex oligosaccharides.

The protein localises to the cell membrane. The enzyme catalyses chloride(in) = chloride(out). It catalyses the reaction L-glutamate(out) = L-glutamate(in). Functionally, calcium-independent, swelling-dependent volume-regulated anion channel (VRAC-swell) which plays a pivotal role in the process of regulatory volume decrease (RVD) in the brain through the efflux of anions like chloride and organic osmolytes like glutamate. The protein is Protein tweety homolog 1 (TTYH1) of Macaca fascicularis (Crab-eating macaque).